Here is a 406-residue protein sequence, read N- to C-terminus: Putative phosphate permease PH0640 (406 aa).

11 helical membrane passes run 2 to 22 (IPID…AWAI), 45 to 65 (AVLI…KTVT), 83 to 103 (VLIY…IIAT), 114 to 134 (SIIG…IVNW), 140 to 160 (VVLS…LVFR), 182 to 202 (FWIG…VLHG), 207 to 227 (IGIL…TSML), 265 to 285 (VANA…GLAG), 288 to 308 (VPVP…GVAT), 330 to 350 (FTID…GMPI), and 385 to 405 (FVTV…LLLI).

The protein belongs to the inorganic phosphate transporter (PiT) (TC 2.A.20) family.

The protein resides in the cell membrane. In terms of biological role, potential transporter for phosphate. This chain is Putative phosphate permease PH0640, found in Pyrococcus horikoshii (strain ATCC 700860 / DSM 12428 / JCM 9974 / NBRC 100139 / OT-3).